A 151-amino-acid polypeptide reads, in one-letter code: Small ribosomal subunit protein bS6 (151 aa).

The segment at 97–151 is disordered; it reads EAEPSAMMQKRDRDDRKDRDRGDRPRRRDDDFGGGDRGDRGDRGDRPERNFGGEN. The segment covering 105-151 has biased composition (basic and acidic residues); that stretch reads QKRDRDDRKDRDRGDRPRRRDDDFGGGDRGDRGDRGDRPERNFGGEN.

It belongs to the bacterial ribosomal protein bS6 family.

Binds together with bS18 to 16S ribosomal RNA. In Methylorubrum populi (strain ATCC BAA-705 / NCIMB 13946 / BJ001) (Methylobacterium populi), this protein is Small ribosomal subunit protein bS6.